Consider the following 453-residue polypeptide: Ribulose bisphosphate carboxylase large chain (453 aa).

Positions 1 to 2 (MS) are excised as a propeptide. P3 is subject to N-acetylproline. The residue at position 14 (K14) is an N6,N6,N6-trimethyllysine. Residues N123 and T173 each coordinate substrate. The active-site Proton acceptor is K175. K177 lines the substrate pocket. 3 residues coordinate Mg(2+): K201, D203, and E204. Residue K201 is modified to N6-carboxylysine. The active-site Proton acceptor is H294. 3 residues coordinate substrate: R295, H327, and S379.

The protein belongs to the RuBisCO large chain family. Type I subfamily. As to quaternary structure, heterohexadecamer of 8 large chains and 8 small chains; disulfide-linked. The disulfide link is formed within the large subunit homodimers. Mg(2+) is required as a cofactor. The disulfide bond which can form in the large chain dimeric partners within the hexadecamer appears to be associated with oxidative stress and protein turnover.

The protein localises to the plastid. The protein resides in the chloroplast. It carries out the reaction 2 (2R)-3-phosphoglycerate + 2 H(+) = D-ribulose 1,5-bisphosphate + CO2 + H2O. The enzyme catalyses D-ribulose 1,5-bisphosphate + O2 = 2-phosphoglycolate + (2R)-3-phosphoglycerate + 2 H(+). RuBisCO catalyzes two reactions: the carboxylation of D-ribulose 1,5-bisphosphate, the primary event in carbon dioxide fixation, as well as the oxidative fragmentation of the pentose substrate in the photorespiration process. Both reactions occur simultaneously and in competition at the same active site. The chain is Ribulose bisphosphate carboxylase large chain from Galium corsicum.